A 243-amino-acid chain; its full sequence is Ubiquinone/menaquinone biosynthesis C-methyltransferase UbiE (243 aa).

S-adenosyl-L-methionine-binding positions include threonine 69, aspartate 90, and 116–117; that span reads DA.

It belongs to the class I-like SAM-binding methyltransferase superfamily. MenG/UbiE family.

It carries out the reaction a 2-demethylmenaquinol + S-adenosyl-L-methionine = a menaquinol + S-adenosyl-L-homocysteine + H(+). The enzyme catalyses a 2-methoxy-6-(all-trans-polyprenyl)benzene-1,4-diol + S-adenosyl-L-methionine = a 5-methoxy-2-methyl-3-(all-trans-polyprenyl)benzene-1,4-diol + S-adenosyl-L-homocysteine + H(+). It functions in the pathway quinol/quinone metabolism; menaquinone biosynthesis; menaquinol from 1,4-dihydroxy-2-naphthoate: step 2/2. It participates in cofactor biosynthesis; ubiquinone biosynthesis. Methyltransferase required for the conversion of demethylmenaquinol (DMKH2) to menaquinol (MKH2) and the conversion of 2-polyprenyl-6-methoxy-1,4-benzoquinol (DDMQH2) to 2-polyprenyl-3-methyl-6-methoxy-1,4-benzoquinol (DMQH2). This Burkholderia cenocepacia (strain ATCC BAA-245 / DSM 16553 / LMG 16656 / NCTC 13227 / J2315 / CF5610) (Burkholderia cepacia (strain J2315)) protein is Ubiquinone/menaquinone biosynthesis C-methyltransferase UbiE.